A 382-amino-acid chain; its full sequence is Cholinephosphotransferase 1 (382 aa).

Residues 1-51 (MPQCECPEPLSAVQLKRLEEHKYSAAGRSLFEPPCQIYWNWLVQQIPTWVA) lie on the Cytoplasmic side of the membrane. The helical transmembrane segment at 52-72 (PNTLTTIGLVINVITTVILVY) threads the bilayer. Asn53 provides a ligand contact to CDP-choline. At 73-82 (YSPTATEEVP) the chain is on the lumenal side. The chain crosses the membrane as a helical span at residues 83–107 (GWAFFLSALGLFIYQSLDAIDGKQA). Positions 100 and 103 each coordinate Mg(2+). Arg108 contacts CDP-choline. Residues 108 to 114 (RRTNSSS) lie on the Cytoplasmic side of the membrane. The chain crosses the membrane as a helical span at residues 115–139 (ALGELFDHGCDAVSTVFVAVGTCIC). A Mg(2+)-binding site is contributed by Asp121. The active-site Proton acceptor is the His122. Asp125 is a binding site for Mg(2+). At 140–149 (CGIGAYPNWM) the chain is on the lumenal side. Residues 150 to 168 (FFCGFVGMFMFFCAHWQTY) traverse the membrane as a helical segment. Topologically, residues 169 to 179 (VSGTLRFGLVD) are cytoplasmic. A helical membrane pass occupies residues 180 to 196 (VTEVQIAIIIMYLLTAF). Topologically, residues 197–211 (TGVSFWEMRVPVLGV) are lumenal. The helical transmembrane segment at 212–237 (NLQTFPILGIIGGFLYSTYNYFFVIM) threads the bilayer. Topologically, residues 238–254 (NGGVGKNGSTVADTSVL) are cytoplasmic. Residues 255-270 (TPGLHIGLILTLAFII) traverse the membrane as a helical segment. Residues 271-282 (FKKSSSHLFEHH) lie on the Lumenal side of the membrane. A helical membrane pass occupies residues 283-305 (PCLYVLTFGMVIAKISNKLVVAH). Over 306–318 (MTKSELHLQDTAF) the chain is Cytoplasmic. Residues 319–328 (IGPGLLFLNQ) traverse the membrane as a helical segment. The Lumenal segment spans residues 329-335 (YFNSYID). The chain crosses the membrane as a helical span at residues 336 to 365 (EHIVLWIAMVLSLVDLVRYCTAVCLQIASH). Residues 366–382 (LRIRVFSISPQGHAHKD) are Cytoplasmic-facing.

Belongs to the CDP-alcohol phosphatidyltransferase class-I family. Mg(2+) serves as cofactor. Mn(2+) is required as a cofactor.

It is found in the golgi apparatus membrane. The catalysed reaction is CDP-choline + a 1,2-diacyl-sn-glycerol = a 1,2-diacyl-sn-glycero-3-phosphocholine + CMP + H(+). It carries out the reaction 1-octadecanoyl-2-(5Z,8Z,11Z,14Z-eicosatetraenoyl)-sn-glycerol + CDP-choline = 1-octadecanoyl-2-(5Z,8Z,11Z,14Z-eicosatetraenoyl)-sn-glycero-3-phosphocholine + CMP + H(+). The enzyme catalyses 1-hexadecanoyl-2-(9Z-octadecenoyl)-sn-glycerol + CDP-choline = 1-hexadecanoyl-2-(9Z-octadecenoyl)-sn-glycero-3-phosphocholine + CMP + H(+). It catalyses the reaction 1-hexadecanoyl-2-(4Z,7Z,10Z,13Z,16Z,19Z-docosahexaenoyl)-sn-glycerol + CDP-choline = 1-hexadecanoyl-2-(4Z,7Z,10Z,13Z,16Z,19Z-docosahexaenoyl)-sn-glycero-3-phosphocholine + CMP + H(+). The catalysed reaction is 1,2-dioctanoyl-sn-glycerol + CDP-choline = 1,2-dioctanoyl-sn-glycero-3-phosphocholine + CMP + H(+). It participates in phospholipid metabolism; phosphatidylcholine biosynthesis; phosphatidylcholine from phosphocholine: step 2/2. Functionally, catalyzes the final step of de novo phosphatidylcholine (PC) synthesis, i.e. the transfer of choline phosphate from CDP-choline to the free hydroxyl of a diacylglycerol (DAG), producing a PC. It thereby plays a central role in the formation and maintenance of vesicular membranes. The protein is Cholinephosphotransferase 1 (chpt1) of Danio rerio (Zebrafish).